The chain runs to 252 residues: MEDKSLVTLKKKTFEVSKFSNLGAIELFVDGRRKRPKYFHRRRETVLNHVGGKKSEHKLDVFDQRDYKMIKSYAFLKIVGVQLVVTSHLPADTPGFIQIDLLDSRLTEKRKRGKTIQRFKARACDNCSVAQYKVEYSISTQENVLDVWKVGCISEGVPVCDGTYPFSIEVSLIWVATDSTRRLNVEELNSSDYIEGDFTDQEVFGEFMSLKQVEMKTIEAKYDGPYRPATTRPKSLLSSEDVKRASNKKNSS.

The segment at 222–252 is disordered; the sequence is YDGPYRPATTRPKSLLSSEDVKRASNKKNSS.

Belongs to the tobamovirus movement protein family.

Transports viral genome to neighboring plant cells directly through plasmosdesmata, without any budding. The movement protein allows efficient cell to cell propagation, by bypassing the host cell wall barrier. Displays RNA-binding activity. The polypeptide is Movement protein (Bidens pilosa (Hairy beggarticks)).